The following is a 226-amino-acid chain: uncharacterized protein (226 aa).

In terms of domain architecture, HTH arsR-type spans methionine 1 to lysine 92. The segment at residues alanine 32–glutamate 55 is a DNA-binding region (H-T-H motif).

This is an uncharacterized protein from Bacillus subtilis (strain 168).